The sequence spans 401 residues: Diphosphomevalonate decarboxylase (401 aa).

Ala-2 carries the post-translational modification N-acetylalanine. Residues 24 to 27, Arg-79, 157 to 162, and Thr-213 each bind (R)-5-diphosphomevalonate; these read YWGK and SGSACR. Residues 382-401 are disordered; sequence VLDDPHHHLLGPDGLPQRDL.

This sequence belongs to the diphosphomevalonate decarboxylase family. In terms of assembly, homodimer.

The protein localises to the cytoplasm. The catalysed reaction is (R)-5-diphosphomevalonate + ATP = isopentenyl diphosphate + ADP + phosphate + CO2. It functions in the pathway steroid biosynthesis; cholesterol biosynthesis. Its function is as follows. Catalyzes the ATP dependent decarboxylation of (R)-5-diphosphomevalonate to form isopentenyl diphosphate (IPP). Functions in the mevalonate (MVA) pathway leading to isopentenyl diphosphate (IPP), a key precursor for the biosynthesis of isoprenoids and sterol synthesis. The sequence is that of Diphosphomevalonate decarboxylase (Mvd) from Rattus norvegicus (Rat).